The sequence spans 350 residues: Probable dual-specificity RNA methyltransferase RlmN (350 aa).

Glu93 (proton acceptor) is an active-site residue. Residues 99–327 (SSKRLTVCVS…VSVRYSRGVQ (229 aa)) form the Radical SAM core domain. An intrachain disulfide couples Cys106 to Cys332. [4Fe-4S] cluster contacts are provided by Cys113, Cys117, and Cys120. Residues 160–161 (GE), Ser190, 213–215 (SLH), and Asn289 each bind S-adenosyl-L-methionine. The active-site S-methylcysteine intermediate is Cys332.

This sequence belongs to the radical SAM superfamily. RlmN family. [4Fe-4S] cluster is required as a cofactor.

It localises to the cytoplasm. The catalysed reaction is adenosine(2503) in 23S rRNA + 2 reduced [2Fe-2S]-[ferredoxin] + 2 S-adenosyl-L-methionine = 2-methyladenosine(2503) in 23S rRNA + 5'-deoxyadenosine + L-methionine + 2 oxidized [2Fe-2S]-[ferredoxin] + S-adenosyl-L-homocysteine. It carries out the reaction adenosine(37) in tRNA + 2 reduced [2Fe-2S]-[ferredoxin] + 2 S-adenosyl-L-methionine = 2-methyladenosine(37) in tRNA + 5'-deoxyadenosine + L-methionine + 2 oxidized [2Fe-2S]-[ferredoxin] + S-adenosyl-L-homocysteine. Functionally, specifically methylates position 2 of adenine 2503 in 23S rRNA and position 2 of adenine 37 in tRNAs. The sequence is that of Probable dual-specificity RNA methyltransferase RlmN from Synechocystis sp. (strain ATCC 27184 / PCC 6803 / Kazusa).